The following is a 447-amino-acid chain: Ribulose bisphosphate carboxylase large chain (447 aa).

Substrate contacts are provided by N89 and T139. K141 serves as the catalytic Proton acceptor. Substrate is bound at residue K143. Residues K167, D169, and E170 each coordinate Mg(2+). N6-carboxylysine is present on K167. The active-site Proton acceptor is H260. Residues R261, H293, and S345 each coordinate substrate.

Belongs to the RuBisCO large chain family. Type I subfamily. In terms of assembly, heterohexadecamer of 8 large chains and 8 small chains; disulfide-linked. The disulfide link is formed within the large subunit homodimers. Mg(2+) serves as cofactor. In terms of processing, the disulfide bond which can form in the large chain dimeric partners within the hexadecamer appears to be associated with oxidative stress and protein turnover.

The protein localises to the plastid. The protein resides in the chloroplast. The catalysed reaction is 2 (2R)-3-phosphoglycerate + 2 H(+) = D-ribulose 1,5-bisphosphate + CO2 + H2O. It carries out the reaction D-ribulose 1,5-bisphosphate + O2 = 2-phosphoglycolate + (2R)-3-phosphoglycerate + 2 H(+). In terms of biological role, ruBisCO catalyzes two reactions: the carboxylation of D-ribulose 1,5-bisphosphate, the primary event in carbon dioxide fixation, as well as the oxidative fragmentation of the pentose substrate in the photorespiration process. Both reactions occur simultaneously and in competition at the same active site. This Convolvulus tricolor (Dwarf morning glory) protein is Ribulose bisphosphate carboxylase large chain.